A 432-amino-acid polypeptide reads, in one-letter code: MGKNVVVLGTQWGDEGKGKIVDLLTERAKYVVRYQGGHNAGHTLVINGEKTVLHLIPSGILRENVTSIIGNGVVLSPAALMKEMKGLEDRGFPVRERLFISEACPLILEYHVALDVAREKARGAKAIGTTGRGIGPAYEDKVARRGLRVGDLFNKETFAAKLKEVMEYHNFQLVNYYKAEAVDYDKVLADVMAIADILTGMVVDVSELLDGARQRGDLIMFEGAQGTLLDIDHGTYPYVTSSNTTAGGVATGSGIGPRYVDYVLGIVKAYSTRVGAGPFPTELFDETGEFLCKQGNEFGATTGRRRRTGWLDAVAVRRAVQINSLSGFCMTKLDVLDGLKEVKLCVAYRMPDGSEVTTTPLAAEGWEGIEPIYETLPGWSETTFGVKTLDGLPQAARDYIKRVEEVTGVPVDIISTGPDRSETMILRDPFDA.

GTP is bound by residues 13–19 (GDEGKGK) and 41–43 (GHT). The Proton acceptor role is filled by aspartate 14. Aspartate 14 and glycine 41 together coordinate Mg(2+). Residues 14–17 (DEGK), 39–42 (NAGH), threonine 130, arginine 144, glutamine 225, threonine 240, and arginine 304 each bind IMP. Residue histidine 42 is the Proton donor of the active site. 300 to 306 (ATTGRRR) is a substrate binding site. Residues arginine 306, 332 to 334 (KLD), and 415 to 417 (STG) each bind GTP.

Belongs to the adenylosuccinate synthetase family. In terms of assembly, homodimer. Mg(2+) serves as cofactor.

It localises to the cytoplasm. It catalyses the reaction IMP + L-aspartate + GTP = N(6)-(1,2-dicarboxyethyl)-AMP + GDP + phosphate + 2 H(+). It participates in purine metabolism; AMP biosynthesis via de novo pathway; AMP from IMP: step 1/2. Its function is as follows. Plays an important role in the de novo pathway of purine nucleotide biosynthesis. Catalyzes the first committed step in the biosynthesis of AMP from IMP. This is Adenylosuccinate synthetase from Erwinia tasmaniensis (strain DSM 17950 / CFBP 7177 / CIP 109463 / NCPPB 4357 / Et1/99).